Consider the following 1453-residue polypeptide: ABC transporter G family member 34 (1453 aa).

The segment at 1 to 24 (MLGRDEDLVRTMSGRGSLGSTSHR) is disordered. Residues 173 to 446 (LGLFHLLPSK…FEYMGFKCPE (274 aa)) form the ABC transporter 1 domain. 206–213 (GPPSSGKT) is an ATP binding site. The region spanning 524 to 737 (DLFKACFDRE…GQTALVINEF (214 aa)) is the ABC transmembrane type-2 1 domain. The next 6 membrane-spanning stretches (helical) occupy residues 542-562 (FVYV…MTVY), 582-602 (LFFS…FTVM), 621-641 (FALP…VIWI), 661-681 (LLAY…LGAL), 687-707 (IANS…GFII), and 773-793 (FWIC…CYII). An ABC transporter 2 domain is found at 852 to 1105 (LAFNNVNYYV…LVEYFEAIEG (254 aa)). An ATP-binding site is contributed by 897–904 (GVSGAGKT). An ABC transmembrane type-2 2 domain is found at 1177 to 1391 (TQTKACFWKM…TLYGIITSQV (215 aa)). 7 helical membrane passes run 1196–1216 (YNAI…LLFW), 1230–1250 (NFFG…AATV), 1289–1309 (IQTG…WTVV), 1311–1331 (FFWF…YGMM), 1341–1361 (IAGI…GFLI), 1366–1386 (IPIW…LYGI), and 1422–1442 (FLPV…FAFA).

It belongs to the ABC transporter superfamily. ABCG family. PDR (TC 3.A.1.205) subfamily. Expressed in roots at low levels.

The protein resides in the membrane. May be a general defense protein. This Arabidopsis thaliana (Mouse-ear cress) protein is ABC transporter G family member 34 (ABCG34).